Reading from the N-terminus, the 191-residue chain is Ankyrin repeat domain-containing protein 22 (191 aa).

ANK repeat units follow at residues 39–68, 72–100, 101–130, and 134–163; these read NGDT…DVNL, KERT…MPVL, LIGY…EVNA, and DGYT…DPMI.

The protein is Ankyrin repeat domain-containing protein 22 (Ankrd22) of Mus musculus (Mouse).